A 422-amino-acid polypeptide reads, in one-letter code: Aminopentol aminotransferase (422 aa).

Lys258 bears the N6-(pyridoxal phosphate)lysine mark.

Belongs to the class-III pyridoxal-phosphate-dependent aminotransferase family. Pyridoxal 5'-phosphate is required as a cofactor.

The protein resides in the cytoplasm. The enzyme catalyses (2S,3S,5R,10R,12S,14S,15R,16R)-2-amino-12,16-dimethylicosane-3,5,10,14,15-pentol + pyruvate = (3S,5R,10R,12S,14S,15R,16R)-3,5,10,14,15-pentahydroxy-12,16-dimethylicosan-2-one + L-alanine. In terms of biological role, involved in degradation of fumonisin B1. Catalyzes the deamination of aminopentol (HFB1) to 2-keto-HFB1. Pyruvate is the preferred cosubstrate, but it can also use several other alpha-keto acids as amino group acceptors. The polypeptide is Aminopentol aminotransferase (fumI) (Sphingopyxis macrogoltabida (Sphingomonas macrogoltabidus)).